The primary structure comprises 256 residues: Protein FixA (256 aa).

The protein belongs to the ETF beta-subunit/FixA family. Heterodimer of FixA and FixB.

It functions in the pathway amine and polyamine metabolism; carnitine metabolism. Its function is as follows. Required for anaerobic carnitine reduction. May bring reductant to CaiA. The chain is Protein FixA from Salmonella agona (strain SL483).